The sequence spans 155 residues: Small ribosomal subunit protein uS7 (155 aa).

It belongs to the universal ribosomal protein uS7 family. Part of the 30S ribosomal subunit. Contacts proteins S9 and S11.

Its function is as follows. One of the primary rRNA binding proteins, it binds directly to 16S rRNA where it nucleates assembly of the head domain of the 30S subunit. Is located at the subunit interface close to the decoding center, probably blocks exit of the E-site tRNA. In Amoebophilus asiaticus (strain 5a2), this protein is Small ribosomal subunit protein uS7.